A 568-amino-acid polypeptide reads, in one-letter code: Small ribosomal subunit protein bS1 (568 aa).

S1 motif domains follow at residues 27 to 93, 111 to 177, 198 to 266, 283 to 353, 370 to 440, and 459 to 530; these read GYVA…LSRE, GERV…VSRR, GQVV…LGMK, GKKI…LGLK, GTEV…LGIK, and NAVV…LSIK.

It belongs to the bacterial ribosomal protein bS1 family.

Binds mRNA; thus facilitating recognition of the initiation point. It is needed to translate mRNA with a short Shine-Dalgarno (SD) purine-rich sequence. This Rhizobium meliloti (strain 1021) (Ensifer meliloti) protein is Small ribosomal subunit protein bS1 (rpsA).